A 372-amino-acid chain; its full sequence is 4-hydroxy-3-methylbut-2-en-1-yl diphosphate synthase (flavodoxin) (372 aa).

The [4Fe-4S] cluster site is built by C270, C273, C305, and E312.

This sequence belongs to the IspG family. [4Fe-4S] cluster serves as cofactor.

The enzyme catalyses (2E)-4-hydroxy-3-methylbut-2-enyl diphosphate + oxidized [flavodoxin] + H2O + 2 H(+) = 2-C-methyl-D-erythritol 2,4-cyclic diphosphate + reduced [flavodoxin]. Its pathway is isoprenoid biosynthesis; isopentenyl diphosphate biosynthesis via DXP pathway; isopentenyl diphosphate from 1-deoxy-D-xylulose 5-phosphate: step 5/6. In terms of biological role, converts 2C-methyl-D-erythritol 2,4-cyclodiphosphate (ME-2,4cPP) into 1-hydroxy-2-methyl-2-(E)-butenyl 4-diphosphate. The polypeptide is 4-hydroxy-3-methylbut-2-en-1-yl diphosphate synthase (flavodoxin) (Enterobacter sp. (strain 638)).